A 183-amino-acid polypeptide reads, in one-letter code: TATA-box-binding protein 2 (183 aa).

2 consecutive repeat copies span residues 8–84 and 99–177.

This sequence belongs to the TBP family.

General factor that plays a role in the activation of archaeal genes transcribed by RNA polymerase. Binds specifically to the TATA box promoter element which lies close to the position of transcription initiation. The polypeptide is TATA-box-binding protein 2 (Methanosarcina mazei (strain ATCC BAA-159 / DSM 3647 / Goe1 / Go1 / JCM 11833 / OCM 88) (Methanosarcina frisia)).